The following is a 1059-amino-acid chain: Dihydropyrimidine dehydrogenase [NADP(+)] (1059 aa).

The region spanning 84–118 is the 4Fe-4S ferredoxin-type 1 domain; sequence ERGALKEAMRCLKCADAPCQKSCPTQLDVKSFITS. 8 residues coordinate [4Fe-4S] cluster: Cys94, Cys97, Cys102, Cys106, Cys145, Cys151, Cys155, and Gln171. FAD contacts are provided by residues 207–211, 231–239, Arg248, and Leu274; these read GCGPA and EKRAYIGGL. NADP(+)-binding positions include 354–357, 378–379, Arg385, 451–453, and 495–501; these read AGDT, RK, AFG, and DVAGVAE. 494–503 is a binding site for FAD; the sequence is GDVAGVAETT. FMN is bound by residues Ser564 and 588–589; that span reads KT. Residues Asn623 and 682 to 684 each bind substrate; that span reads NLS. Cys685 (proton acceptor) is an active-site residue. Lys723 is a binding site for FMN. Residue 750 to 751 coordinates substrate; it reads NT. Residues Gly781, 807–809, and 830–831 each bind FMN; these read TGG and CS. 4Fe-4S ferredoxin-type domains follow at residues 955–987 and 989–1019; these read KVAI…FDPV and HQPH…MVPR. The [4Fe-4S] cluster site is built by Cys964, Cys967, Cys970, Cys974, Cys998, Cys1001, Cys1004, and Cys1008.

This sequence belongs to the dihydropyrimidine dehydrogenase family. The cofactor is [4Fe-4S] cluster. Requires FAD as cofactor. FMN is required as a cofactor.

It carries out the reaction 5,6-dihydrouracil + NADP(+) = uracil + NADPH + H(+). The protein operates within amino-acid biosynthesis; beta-alanine biosynthesis. Functionally, involved in pyrimidine base degradation. Catalyzes the reduction of uracil and thymine. Involved in the degradation of the chemotherapeutic drug 5-fluorouracil. This is Dihydropyrimidine dehydrogenase [NADP(+)] (dpyd-1) from Caenorhabditis elegans.